A 121-amino-acid chain; its full sequence is Large ribosomal subunit protein uL14 (121 aa).

The protein belongs to the universal ribosomal protein uL14 family. As to quaternary structure, part of the 50S ribosomal subunit. Forms a cluster with proteins L3 and L19. In the 70S ribosome, L14 and L19 interact and together make contacts with the 16S rRNA in bridges B5 and B8.

In terms of biological role, binds to 23S rRNA. Forms part of two intersubunit bridges in the 70S ribosome. This chain is Large ribosomal subunit protein uL14, found in Aquifex pyrophilus.